A 326-amino-acid polypeptide reads, in one-letter code: Zinc finger protein 830 (326 aa).

The span at 1–11 (MAASRKGKAVK) shows a compositional bias: basic residues. Residues 1–37 (MAASRKGKAVKAVKQEDLRRLMQETRRDSGRQKRVES) form a disordered region. A compositionally biased stretch (basic and acidic residues) spans 13 to 36 (VKQEDLRRLMQETRRDSGRQKRVE). The C2H2-type zinc-finger motif lies at 50 to 72 (CALCDAPVKNALLWQTHVLGKQH). Residues 83 to 108 (TAPAHTPAPAHTPAHTPAAASSSSST) are compositionally biased toward low complexity. 3 disordered regions span residues 83–214 (TAPA…PVRD), 237–257 (EMRQ…EEGR), and 276–309 (EELR…EEEE). Positions 180–195 (HSGSVSKAEQQESQEP) are enriched in polar residues. Positions 224–295 (KDQLEREWEE…RSRRRSQRRE (72 aa)) form a coiled coil. Residues 276–286 (EELRAKQETAR) show a composition bias toward basic and acidic residues. The span at 298-309 (PMQEEEPLEEEE) shows a compositional bias: acidic residues.

Its subcellular location is the nucleus. It is found in the chromosome. The protein localises to the nucleus speckle. Its function is as follows. May act as an important regulator of the cell cycle that participates in the maintenance of genome integrity. The polypeptide is Zinc finger protein 830 (Danio rerio (Zebrafish)).